Here is a 299-residue protein sequence, read N- to C-terminus: ATP phosphoribosyltransferase (299 aa).

This sequence belongs to the ATP phosphoribosyltransferase family. Long subfamily. Mg(2+) is required as a cofactor.

The protein localises to the cytoplasm. The enzyme catalyses 1-(5-phospho-beta-D-ribosyl)-ATP + diphosphate = 5-phospho-alpha-D-ribose 1-diphosphate + ATP. Its pathway is amino-acid biosynthesis; L-histidine biosynthesis; L-histidine from 5-phospho-alpha-D-ribose 1-diphosphate: step 1/9. With respect to regulation, feedback inhibited by histidine. Functionally, catalyzes the condensation of ATP and 5-phosphoribose 1-diphosphate to form N'-(5'-phosphoribosyl)-ATP (PR-ATP). Has a crucial role in the pathway because the rate of histidine biosynthesis seems to be controlled primarily by regulation of HisG enzymatic activity. This is ATP phosphoribosyltransferase from Shewanella woodyi (strain ATCC 51908 / MS32).